Consider the following 177-residue polypeptide: NADH-quinone oxidoreductase subunit E (177 aa).

The [2Fe-2S] cluster site is built by Cys-93, Cys-98, Cys-134, and Cys-138.

The protein belongs to the complex I 24 kDa subunit family. [2Fe-2S] cluster serves as cofactor.

The enzyme catalyses a quinone + NADH + 5 H(+)(in) = a quinol + NAD(+) + 4 H(+)(out). Its function is as follows. NDH-1 shuttles electrons from NADH, via FMN and iron-sulfur (Fe-S) centers, to quinones in the respiratory chain. Couples the redox reaction to proton translocation (for every two electrons transferred, four hydrogen ions are translocated across the cytoplasmic membrane), and thus conserves the redox energy in a proton gradient. In Rickettsia prowazekii (strain Madrid E), this protein is NADH-quinone oxidoreductase subunit E (nuoE).